Here is a 224-residue protein sequence, read N- to C-terminus: Large ribosomal subunit protein uL3 (224 aa).

A disordered region spans residues 132–153; it reads SQTKTHGTHEYQRHPGAIGQRK.

Belongs to the universal ribosomal protein uL3 family. Part of the 50S ribosomal subunit. Forms a cluster with proteins L14 and L19.

In terms of biological role, one of the primary rRNA binding proteins, it binds directly near the 3'-end of the 23S rRNA, where it nucleates assembly of the 50S subunit. This Myxococcus xanthus (strain DK1622) protein is Large ribosomal subunit protein uL3.